A 598-amino-acid polypeptide reads, in one-letter code: Arylsulfate sulfotransferase AssT (598 aa).

Residues 1–27 (MFDKYRKTLVAGTVAITLGLSASGVMA) form the signal peptide. 4-methylumbelliferone is bound by residues histidine 279 and histidine 383. Residues cysteine 445 and cysteine 451 are joined by a disulfide bond. Histidine 463 contacts 4-methylumbelliferone. Histidine 463 (nucleophile; sulfurylated histidine covalent intermediate) is an active-site residue.

It belongs to the aryl sulfotransferase family. Homodimer. The disulfide bond is crucial for enzyme activity.

It is found in the periplasm. It catalyses the reaction an aryl sulfate + a phenol = an aryl sulfate + a phenol. The catalysed reaction is 4-methylumbelliferone sulfate + phenol = phenyl sulfate + 4-methylumbelliferone. In terms of biological role, catalyzes the transfer of a sulfate group from a phenyl sulfate ester to other phenolic compounds. In vitro, is able to use 4-methylumbelliferyl sulfate and p-nitrophenyl sulfate (PNS) as donor substrates with phenol as the acceptor substrate. Cannot use 3'-phosphoadenosine-5'-phophosulfate (PAPS), the donor substrate of mammalian sulfotransferase. The chain is Arylsulfate sulfotransferase AssT from Escherichia coli O6:H1 (strain CFT073 / ATCC 700928 / UPEC).